The following is a 383-amino-acid chain: Queuine tRNA-ribosyltransferase (383 aa).

The Proton acceptor role is filled by aspartate 92. Residues 92-96 (DSGGF), aspartate 146, glutamine 190, and glycine 217 each bind substrate. Residues 248-254 (GVGKPED) are RNA binding. Aspartate 267 functions as the Nucleophile in the catalytic mechanism. Positions 272–276 (TRNAR) are RNA binding; important for wobble base 34 recognition. 4 residues coordinate Zn(2+): cysteine 310, cysteine 312, cysteine 315, and histidine 341.

The protein belongs to the queuine tRNA-ribosyltransferase family. As to quaternary structure, homodimer. Within each dimer, one monomer is responsible for RNA recognition and catalysis, while the other monomer binds to the replacement base PreQ1. The cofactor is Zn(2+).

It catalyses the reaction 7-aminomethyl-7-carbaguanine + guanosine(34) in tRNA = 7-aminomethyl-7-carbaguanosine(34) in tRNA + guanine. The protein operates within tRNA modification; tRNA-queuosine biosynthesis. Its function is as follows. Catalyzes the base-exchange of a guanine (G) residue with the queuine precursor 7-aminomethyl-7-deazaguanine (PreQ1) at position 34 (anticodon wobble position) in tRNAs with GU(N) anticodons (tRNA-Asp, -Asn, -His and -Tyr). Catalysis occurs through a double-displacement mechanism. The nucleophile active site attacks the C1' of nucleotide 34 to detach the guanine base from the RNA, forming a covalent enzyme-RNA intermediate. The proton acceptor active site deprotonates the incoming PreQ1, allowing a nucleophilic attack on the C1' of the ribose to form the product. After dissociation, two additional enzymatic reactions on the tRNA convert PreQ1 to queuine (Q), resulting in the hypermodified nucleoside queuosine (7-(((4,5-cis-dihydroxy-2-cyclopenten-1-yl)amino)methyl)-7-deazaguanosine). This Psychrobacter sp. (strain PRwf-1) protein is Queuine tRNA-ribosyltransferase.